A 149-amino-acid polypeptide reads, in one-letter code: Calmodulin-B (149 aa).

Alanine 2 is subject to N-acetylalanine. EF-hand domains follow at residues 8-43 (EQIA…LGQN), 44-79 (PTEA…KMKE), 81-116 (DSEE…LGEK), and 117-149 (LTDE…MTCK). Residues aspartate 21, aspartate 23, aspartate 25, threonine 27, glutamate 32, aspartate 57, aspartate 59, asparagine 61, threonine 63, glutamate 68, aspartate 94, aspartate 96, asparagine 98, and glutamate 105 each contribute to the Ca(2+) site. Residue lysine 116 is modified to N6,N6,N6-trimethyllysine. The Ca(2+) site is built by aspartate 130, aspartate 132, aspartate 134, glutamine 136, and glutamate 141.

Belongs to the calmodulin family.

Calmodulin mediates the control of a large number of enzymes, ion channels and other proteins by Ca(2+). Among the enzymes to be stimulated by the calmodulin-Ca(2+) complex are a number of protein kinases and phosphatases. This Halocynthia roretzi (Sea squirt) protein is Calmodulin-B.